The following is a 220-amino-acid chain: Small ribosomal subunit protein uS3c (220 aa).

Residues 43–120 (IQHYVEKNTR…RLNIAIIRVA (78 aa)) form the KH type-2 domain.

The protein belongs to the universal ribosomal protein uS3 family. In terms of assembly, part of the 30S ribosomal subunit.

It localises to the plastid. It is found in the chloroplast. The protein is Small ribosomal subunit protein uS3c (rps3) of Piper cenocladum (Ant piper).